We begin with the raw amino-acid sequence, 679 residues long: MSAPKNEMYYSLLEWFKTLNLNAPHADAESLADGVALAQALNQFAPESFTDAWLSKIKASAVGSNWRLRMSNLKKVTQSVYDYYSDVLNYSLSDFSKPDLQRIAEKCDLGELERLLQLVLGCAVNCAEKQSYITEIMCLEEELQANIMRALQELEATRQASTPEGGVASSLSRGSRTGLLDSKAVQEDRDALAQKCFETEKKMLLLIDEKTNLQQELHKLQQEFARLEQHSTVIGDDGVSLGPVQTGSVRYNELRRQLDLLKEELLQSEGAREDLKIKAQQQDTDLLHMQMRIEELMKSSAEVTTLKDEVDVLRESNDKLKICEAQLDTYKKKLEDYNDLKKQVKILEERSADYVQQNAQFEEDAKRYANTKGQVELFKKEIQDLHAKLDAESSKNVKLEFDNKNLEGKNLALQRAKDSLLKERDNLREAVDELKCGQLSSSTALTGTTVSRELQPSATVEKLQRLEAENKALREGQGGQTALAQLLDDANKRCENLREQLKTANERILSLSHASQSDDPILKESEFGKQIKQLMELNEQKTLQLEEAVTQSTSLQCKVTQLETNLSAREQEILVYDAKYRKCVEKAKEVIKSIDPRIASALDASVLEKSADLVEEEPKPKMSVMEEQLMTSAFYRLGVNAQRDAIDSKLAILMGSGQTFLARQRQSAPRKSLSAMKSK.

A Calponin-homology (CH) domain is found at 6–123 (NEMYYSLLEW…RLLQLVLGCA (118 aa)). Coiled coils occupy residues 135–437 (EIMC…LKCG) and 480–574 (QTAL…QEIL).

The protein belongs to the hook family. In terms of assembly, homodimer. Interacts with microtubules via its N-terminus.

It localises to the cytoplasm. It is found in the cytoskeleton. The protein resides in the endosome. The protein localises to the synapse. Its function is as follows. Involved in endocytic trafficking by stabilizing organelles of the endocytic pathway. Probably acts as a cytoskeletal linker protein required to tether endosome vesicles to the cytoskeleton. Involved in modulation of endocytosis at stages required for down-regulation of membrane proteins that control synapse size. Not involved in synaptic vesicle recycling. Required in R7 cells for boss endocytosis into multivesicular bodies (MVBs). Has a role in regulating adult longevity. The polypeptide is Protein hook (Drosophila simulans (Fruit fly)).